Consider the following 136-residue polypeptide: Secreted RxLR effector protein 63 (136 aa).

The N-terminal stretch at 1–21 is a signal peptide; that stretch reads MQRFPYSLLLLLLSATNRSRR. The RxLR signature appears at 43 to 46; the sequence is RMLR.

Belongs to the RxLR effector family.

The protein localises to the secreted. The protein resides in the host nucleus. Effector that partially suppresses the tobacco programmed cell death induced by cell death-inducing proteins. This chain is Secreted RxLR effector protein 63, found in Plasmopara viticola (Downy mildew of grapevine).